The following is a 283-amino-acid chain: Phosphatidylserine decarboxylase proenzyme (283 aa).

Catalysis depends on charge relay system; for autoendoproteolytic cleavage activity residues D90, H143, and S248. S248 acts as the Schiff-base intermediate with substrate; via pyruvic acid; for decarboxylase activity in catalysis. S248 is subject to Pyruvic acid (Ser); by autocatalysis.

It belongs to the phosphatidylserine decarboxylase family. PSD-B subfamily. Prokaryotic type I sub-subfamily. As to quaternary structure, heterodimer of a large membrane-associated beta subunit and a small pyruvoyl-containing alpha subunit. It depends on pyruvate as a cofactor. In terms of processing, is synthesized initially as an inactive proenzyme. Formation of the active enzyme involves a self-maturation process in which the active site pyruvoyl group is generated from an internal serine residue via an autocatalytic post-translational modification. Two non-identical subunits are generated from the proenzyme in this reaction, and the pyruvate is formed at the N-terminus of the alpha chain, which is derived from the carboxyl end of the proenzyme. The autoendoproteolytic cleavage occurs by a canonical serine protease mechanism, in which the side chain hydroxyl group of the serine supplies its oxygen atom to form the C-terminus of the beta chain, while the remainder of the serine residue undergoes an oxidative deamination to produce ammonia and the pyruvoyl prosthetic group on the alpha chain. During this reaction, the Ser that is part of the protease active site of the proenzyme becomes the pyruvoyl prosthetic group, which constitutes an essential element of the active site of the mature decarboxylase.

Its subcellular location is the cell membrane. The catalysed reaction is a 1,2-diacyl-sn-glycero-3-phospho-L-serine + H(+) = a 1,2-diacyl-sn-glycero-3-phosphoethanolamine + CO2. It functions in the pathway phospholipid metabolism; phosphatidylethanolamine biosynthesis; phosphatidylethanolamine from CDP-diacylglycerol: step 2/2. Its function is as follows. Catalyzes the formation of phosphatidylethanolamine (PtdEtn) from phosphatidylserine (PtdSer). The sequence is that of Phosphatidylserine decarboxylase proenzyme from Francisella tularensis subsp. novicida (strain U112).